The primary structure comprises 260 residues: Ribosomal RNA small subunit methyltransferase J (260 aa).

Residues R108–D109, E124–R125, and D178 contribute to the S-adenosyl-L-methionine site.

Belongs to the methyltransferase superfamily. RsmJ family.

The protein resides in the cytoplasm. The enzyme catalyses guanosine(1516) in 16S rRNA + S-adenosyl-L-methionine = N(2)-methylguanosine(1516) in 16S rRNA + S-adenosyl-L-homocysteine + H(+). In terms of biological role, specifically methylates the guanosine in position 1516 of 16S rRNA. The sequence is that of Ribosomal RNA small subunit methyltransferase J from Ectopseudomonas mendocina (strain ymp) (Pseudomonas mendocina).